We begin with the raw amino-acid sequence, 221 residues long: Large ribosomal subunit protein uL4 (221 aa).

The segment at 46-74 (AGTASTKTRSEVSGGGRKPWPQKHTGRAR) is disordered.

This sequence belongs to the universal ribosomal protein uL4 family. Part of the 50S ribosomal subunit.

Its function is as follows. One of the primary rRNA binding proteins, this protein initially binds near the 5'-end of the 23S rRNA. It is important during the early stages of 50S assembly. It makes multiple contacts with different domains of the 23S rRNA in the assembled 50S subunit and ribosome. Functionally, forms part of the polypeptide exit tunnel. The protein is Large ribosomal subunit protein uL4 of Petrotoga mobilis (strain DSM 10674 / SJ95).